Reading from the N-terminus, the 1736-residue chain is MIYLKILEKLNQAIWLFDINKRVLIWGNQSCKKYKNIESITSLFNNSNLINDIRNGKSKHEHIDIIESNENGEILKQMIFKYSSIHISDMDARQLYLDTSINLLVNQDSHYLDYEGKRIFILVEAIEEIKFIQSPLSSSIENHNINNNQNNQNSVNINSSNKGQYNRPEPSNMGSWEWNVQNDTTKASNQFYKIIGIENDFNKKLNFNDFINKLGIQEIQPIINNCIESNSSSFEYPLRINRKNDNLVRYIQLKGEIIKKDDKVFKVLGVCHDFSEIQEAKDKLEEESKFVEALIGCLKAGIVACNSNGDLTHFNKSAQDLHGLELNDKTDRKQLLDQILKCYRSPYEQINLEKSGTPIIRALSGEFINDQEIIITPTSNQQQSSLSKSNRPRSQSNCSNGNKSQNRLSKNYSTTTTTTNNNNNNNNNNNNNNNNNNNNNSISQQQQTQVSTQQTQQQQNTTNGIGGATTSTTAAAATITSPQQIPIATKIPTKINDNEFLVLASGQEIVSKDGKTIGAFVALHDITERKRNEVILKNATEEAQRANQLKGEFLANISHELLSPMNSIIGMVGLCLDVAPRNLKEMLNDVVESSKILLDLLHQILDFTTLESNSLAVRPFPFKLRDTFNQLFKVFYTRIIEKKISLTFSIDPNIADDFYGDQNRLKQILSNLIDNAIKFSNSSNINNSISIIVEQLTHNQFKKYKDSFRSNSKTHSRLNSHDDYSIDGDYDDQDNNDSYFGRDINVSDNESAVGGFSELDEKDNSDDDDENDDENDETDENDDDTDDDTSSNTSRNNISNNLLFHNNTSGGGGGGINKREKFKKKDREGFVNLKFSIKDRGIGVPEDKHDFIFDRFFQVDGSYSRVQGGVGLGLSICKKLIEFFGGAIWFESEASQGSTFHFILSIKSVEAPSPKSPSLQSSNGSINSTTKLFESSRLKNEIYIPSLPNVQTKKVKKDSNDNGNNDSTNYGISLSNSMNNININGSTLNNNNSINNNNNSNDNGPLTSRTPSNSYYNFIASLNNTSLKSSSHNTLSSSPTGFNGISNLNISGLNNLSNLSNNPNNLNNIIGNTNGNNNTNGNNNSGISLNNSNNNIQTPNGLNNSRGSSLISTPSTKNVKKQHSCPMDLIQRIHSICTPRGPISKECGLNNLPAYSPPKSPGRSLSHGGKNYSNLISTPRGGVGYSSPPINSSSSSGGGSSTNGSNSGNSSANNSTPSSSSLSSTPLTSSNTPSPVSISSNNVNNNNQQQQTQPILSPILPLKDNSIDISDLNNINSLTPNSSNSTSTNVTQSSSNIINNGNSITIINNNPVTPNGKKIVIVPLLSLQSASSPKQSQRGYSPKQQYSPKQYSPKQQYSPKQYSPKQQQQQQQQQQQLEQLSGRMSPHKSNLSSTNLHHIHHHHIHQQQSQQHNNTTVHSNNLILNNNNNNNNNNNNNNNNNNNNNNNNNNNNNNTTNTSNNHTSDPSKSSNSTPETSPPISSPRSNNNNNCSLTTIVGVTTPPQPSSTITTPQFQSPPILSGNSGNINLLSSNGTSSGGIEISGSQMIPQKVLVAEDNTMNQKLIKTLLTKRGFDITIAKDGKQALDFYHESKNKSILYDCILMDIQMPILSGLEATCAIREIEANEGGHIPIIAVTAHAMKGDKEKFLESGVDDYVTKPINPKLLYEVINTQICKYIEENRSSSTINENKNTINNNNNNTNNNNNNNNSSNPVNNNNSNSIDATQQELNNEKIRI.

Over residues 143-161 the composition is skewed to low complexity; sequence HNINNNQNNQNSVNINSSN. Residues 143 to 171 form a disordered region; it reads HNINNNQNNQNSVNINSSNKGQYNRPEPS. Positions 234–286 constitute a PAC domain; that stretch reads FEYPLRINRKNDNLVRYIQLKGEIIKKDDKVFKVLGVCHDFSEIQEAKDKLEE. The PAS domain maps to 287–358; the sequence is ESKFVEALIG…QINLEKSGTP (72 aa). The tract at residues 378-469 is disordered; the sequence is TSNQQQSSLS…NTTNGIGGAT (92 aa). Over residues 379 to 389 the composition is skewed to low complexity; that stretch reads SNQQQSSLSKS. Over residues 392–412 the composition is skewed to polar residues; that stretch reads PRSQSNCSNGNKSQNRLSKNY. A compositionally biased stretch (low complexity) spans 413 to 469; it reads STTTTTTNNNNNNNNNNNNNNNNNNNNNSISQQQQTQVSTQQTQQQQNTTNGIGGAT. A Histidine kinase domain is found at 556-908; it reads NISHELLSPM…TFHFILSIKS (353 aa). The residue at position 559 (His-559) is a Phosphohistidine; by autocatalysis. Disordered stretches follow at residues 711 to 821, 952 to 971, 1080 to 1124, 1157 to 1258, 1277 to 1301, 1330 to 1393, and 1419 to 1520; these read NSKT…KREK, TKKV…TNYG, NGNN…KQHS, PPKS…ILSP, SLTP…INNG, ASSP…NLSS, and SNNL…PPIL. Acidic residues-rich tracts occupy residues 725–735 and 758–789; these read SIDGDYDDQDN and ELDE…DDDT. Low complexity-rich tracts occupy residues 790-807, 961-971, and 1080-1096; these read SSNT…FHNN, DNGNNDSTNYG, and NGNN…NNNI. The segment covering 1097 to 1117 has biased composition (polar residues); that stretch reads QTPNGLNNSRGSSLISTPSTK. Composition is skewed to low complexity over residues 1186–1195 and 1202–1258; these read SSPPINSSSS and TNGS…ILSP. Residues 1330-1339 are compositionally biased toward polar residues; that stretch reads ASSPKQSQRG. 4 stretches are compositionally biased toward low complexity: residues 1340 to 1376, 1425 to 1475, 1482 to 1492, and 1506 to 1520; these read YSPK…QQQQ, NNNN…STPE, SPRSNNNNNCS, and SSTI…PPIL. The Response regulatory domain maps to 1551-1674; the sequence is KVLVAEDNTM…LLYEVINTQI (124 aa). A 4-aspartylphosphate modification is found at Asp-1605. Over residues 1695 to 1722 the composition is skewed to low complexity; the sequence is NNNNNNTNNNNNNNNSSNPVNNNNSNSI. The disordered stretch occupies residues 1695-1736; sequence NNNNNNTNNNNNNNNSSNPVNNNNSNSIDATQQELNNEKIRI.

Activation probably requires transfer of a phosphate group between a histidine in the kinase core (transmitter) domain and an aspartate of the receiver domain.

It carries out the reaction ATP + protein L-histidine = ADP + protein N-phospho-L-histidine.. In terms of biological role, acts as a receptor histidine kinase for a signal transduction pathway. This protein undergoes an ATP-dependent autophosphorylation at a conserved histidine residue in the kinase core, and a phosphoryl group is then transferred to a conserved aspartate residue in the receiver domain. The protein is Hybrid signal transduction histidine kinase I (dhkI-1) of Dictyostelium discoideum (Social amoeba).